The following is a 393-amino-acid chain: MAVIKMTDLDLKGKRVLLREDLNVPLKEGRITSDKRIRAALPSIRMAMEAGARVLIVSHLGRPVEGEFDEAFSLAPVAAHLSRELGRDVRLVKDYIDGVDVAEGDCVLCENVRFLKGEKKNTEELGRRLAALCDIFVMDAFGAAHRAQASTHAVARFAPVACAGPLLAAELDALERALDAPKHPLVGIIGGSKVSTKLTLLDNLSHRVDRLIVGGGIANNFIKAAGYEVGKSLYEPELVEEAARLMAAARAAGGEIPVPLDVVVGPELADGAPATVRKVSEVGPDEMILDIGPATATRYREILLAAGTIVWNGPVGAFEWEQFGAGTRALCEAVADSPAFSIAGGGDTVAAVEKYGVASRVGYISTGGGAFLEFLEGKELPAVAILQERAAQS.

Residues 21-23 (DLN), Arg36, 59-62 (HLGR), Arg113, and Arg146 each bind substrate. Residues Lys197, Glu319, and 345 to 348 (GGDT) each bind ATP.

Belongs to the phosphoglycerate kinase family. As to quaternary structure, monomer.

It localises to the cytoplasm. The catalysed reaction is (2R)-3-phosphoglycerate + ATP = (2R)-3-phospho-glyceroyl phosphate + ADP. The protein operates within carbohydrate degradation; glycolysis; pyruvate from D-glyceraldehyde 3-phosphate: step 2/5. The protein is Phosphoglycerate kinase of Nitratidesulfovibrio vulgaris (strain ATCC 29579 / DSM 644 / CCUG 34227 / NCIMB 8303 / VKM B-1760 / Hildenborough) (Desulfovibrio vulgaris).